The chain runs to 322 residues: Formimidoylglutamase (322 aa).

H130, D156, H158, D160, C244, and D246 together coordinate Mn(2+).

The protein belongs to the arginase family. Requires Mn(2+) as cofactor.

The enzyme catalyses N-formimidoyl-L-glutamate + H2O = formamide + L-glutamate. The protein operates within amino-acid degradation; L-histidine degradation into L-glutamate; L-glutamate from N-formimidoyl-L-glutamate (hydrolase route): step 1/1. Its function is as follows. Catalyzes the conversion of N-formimidoyl-L-glutamate to L-glutamate and formamide. The polypeptide is Formimidoylglutamase (Geobacillus thermodenitrificans (strain NG80-2)).